Reading from the N-terminus, the 910-residue chain is MDSSGASSPDMEPSYGGGLFDMVKGGAGRLFSNLKDNLKDTLKDTSSRVIQSVTSYTKGDLDFTYVTSRIIVMSFPLDSVDIGFRNQVDDIRSFLDSRHLDHYTVYNLSPKSYRTAKFHSRVSECSWPIRQAPSLHNLFAVCRNMYNWLLQNPKNVCVVHCLDGRAASSILVGAMFIFCNLYSTPGPAVRLLYAKRPGIGLSPSHRRYLGYMCDLLADKPYRPHFKPLTIKSITVSPVPFFNKQRNGCRPYCDVLIGETKIYTTCADFERMKEYRVQDGKIFIPLSITVQGDVVVSMYHLRSTIGSRLQAKVTNTQIFQLQFHTGFIPLDTTVLKFTKPELDACDVPEKYPQLFQVTLDVELQPHDKVMELTPPWEHYCTKDVNPSILFSSHQEHQDTLVLGGQAPIDIPPDNPRHFGQGGFFSTLCWQDQKSEKSFCEEDHAALVNQESEQSDDELLTLSSPHGNANGDKPHAARKPSKKQQEPAAPAPPEDVDLLGLEGSAVSKNFSSPAAPPSNSELLSDLFGGGGAAGPVQSGQSGVDDVFHPSGPTSTQSTPRRSATSTSASPTLRVGEGATFDPFGAPSKPSGQDLLGSFLNTASASSDPFLQPTRSPSPTVHASSTPAVNIQPDVSGAWDWHTKPGGFGMGSKSAATSPTGSSHGTPTHQNKPQTLDPFADLGTLGGSSFASKPSTPTGLGGGFPPLSSPQKASPQPMGGGWQQGGGYNWQQTQSKPQSSMPHSSPQNRPNYNVSFSSMPGGQNERGKAAANLEGKQKAADFEDLLSGQGFNAHKDKKGPRTIAEMRKEEMAKEMDPEKLKILEWIEGKERNIRALLSTMHTVLWAGETKWKPVGMADLVTPEQVKKVYRKAVLVVHPDKATGQPYEQYAKMIFMELNDAWSEFENQGQKPLY.

3 tandem repeats follow at residues 33–36, 37–40, and 41–44. The interval 33-44 is 3 X 4 AA approximate tandem repeats; that stretch reads NLKDNLKDTLKD. Residues 52-219 form the Phosphatase tensin-type domain; that stretch reads SVTSYTKGDL…GYMCDLLADK (168 aa). S109 carries the post-translational modification Phosphoserine. C161 (phosphocysteine intermediate) is an active-site residue. The region spanning 225–363 is the C2 tensin-type domain; the sequence is FKPLTIKSIT…FQVTLDVELQ (139 aa). Residues 406–414 carry the SH3-binding motif; sequence PIDIPPDNP. Positions 448-772 are disordered; the sequence is QESEQSDDEL…RGKAAANLEG (325 aa). Residues S450, S453, S560, and S567 each carry the phosphoserine modification. Over residues 547–569 the composition is skewed to low complexity; sequence PSGPTSTQSTPRRSATSTSASPT. Positions 596–626 are enriched in polar residues; the sequence is FLNTASASSDPFLQPTRSPSPTVHASSTPAV. Positions 651–666 are enriched in low complexity; sequence SAATSPTGSSHGTPTH. The span at 715–725 shows a compositional bias: gly residues; sequence MGGGWQQGGGY. Positions 732-758 are enriched in polar residues; that stretch reads SKPQSSMPHSSPQNRPNYNVSFSSMPG. The 65-residue stretch at 846–910 folds into the J domain; it reads TKWKPVGMAD…FENQGQKPLY (65 aa).

As to quaternary structure, forms a complex composed of HSPA8, CLTC and DNAJC6. Interacts with HSPA8/HSC70 in an ATP-dependent manner; this interaction stimulates the HSPA8's ATPase activity. Interacts with CLTC; this interaction produces a local change in heavy-chain contacts, creating a detectable global distortion of the clathrin coat. Interacts with AP2A2. Interacts with DNM1(GTP-bound form); this interaction allows clathrin-coated vesicle (CCV) formation at the plasma membrane. Post-translationally, the N-terminus is blocked. Phosphorylation at Ser-567 modulates its ability to bind CLTC and therefore the synaptic vesicle endocytosis (SVE). Brain.

It localises to the cytoplasmic vesicle. It is found in the clathrin-coated vesicle. Functionally, may act as a protein phosphatase and/or a lipid phosphatase. Co-chaperone that recruits HSPA8/HSC70 to clathrin-coated vesicles (CCVs) and promotes the ATP-dependent dissociation of clathrin from CCVs and participates in clathrin-mediated endocytosis of synaptic vesicles and their recycling and also in intracellular trafficking. Firstly, binds tightly to the clathrin cages, at a ratio of one DNAJC6 per clathrin triskelion. The HSPA8:ATP complex then binds to the clathrin-auxilin cage, initially at a ratio of one HSPA8 per triskelion leading to ATP hydrolysis stimulation and causing a conformational change in the HSPA8. This cycle is repeated three times to drive to a complex containing the clathrin-auxilin cage associated to three HSPA8:ADP complex. The ATP hydrolysis of the third HSPA8:ATP complex leads to a concerted dismantling of the cage into component triskelia. Then, dissociates from the released triskelia and be recycled to initiate another cycle of HSPA8's recruitment. Also acts during the early steps of clathrin-coated vesicle (CCV) formation through its interaction with the GTP bound form of DNM1. The polypeptide is Auxilin (Bos taurus (Bovine)).